The sequence spans 556 residues: DNA ligase (556 aa).

Glutamate 245 lines the ATP pocket. Catalysis depends on lysine 247, which acts as the N6-AMP-lysine intermediate. 6 residues coordinate ATP: arginine 252, arginine 267, glutamate 296, phenylalanine 336, arginine 408, and lysine 414.

This sequence belongs to the ATP-dependent DNA ligase family. It depends on Mg(2+) as a cofactor.

The enzyme catalyses ATP + (deoxyribonucleotide)n-3'-hydroxyl + 5'-phospho-(deoxyribonucleotide)m = (deoxyribonucleotide)n+m + AMP + diphosphate.. In terms of biological role, DNA ligase that seals nicks in double-stranded DNA during DNA replication, DNA recombination and DNA repair. The sequence is that of DNA ligase from Methanosphaerula palustris (strain ATCC BAA-1556 / DSM 19958 / E1-9c).